Reading from the N-terminus, the 371-residue chain is 3-isopropylmalate dehydrogenase (371 aa).

The substrate site is built by Arg-104, Arg-114, Arg-142, and Asp-232. Mg(2+)-binding residues include Asp-232, Asp-256, and Asp-260. Residue 290-302 (GSAPDIAGQDKAN) participates in NAD(+) binding.

This sequence belongs to the isocitrate and isopropylmalate dehydrogenases family. LeuB type 1 subfamily. In terms of assembly, homodimer. Mg(2+) is required as a cofactor. Mn(2+) serves as cofactor.

It is found in the cytoplasm. The enzyme catalyses (2R,3S)-3-isopropylmalate + NAD(+) = 4-methyl-2-oxopentanoate + CO2 + NADH. It functions in the pathway amino-acid biosynthesis; L-leucine biosynthesis; L-leucine from 3-methyl-2-oxobutanoate: step 3/4. Catalyzes the oxidation of 3-carboxy-2-hydroxy-4-methylpentanoate (3-isopropylmalate) to 3-carboxy-4-methyl-2-oxopentanoate. The product decarboxylates to 4-methyl-2 oxopentanoate. The protein is 3-isopropylmalate dehydrogenase of Synechococcus sp. (strain JA-2-3B'a(2-13)) (Cyanobacteria bacterium Yellowstone B-Prime).